The sequence spans 475 residues: Methylenetetrahydrofolate--tRNA-(uracil-5-)-methyltransferase TrmFO (475 aa).

An FAD-binding site is contributed by 9-14; it reads GGGLAG. The segment at 427 to 447 is disordered; the sequence is APRNETGRRLRGPEKAALKKR.

This sequence belongs to the MnmG family. TrmFO subfamily. It depends on FAD as a cofactor.

The protein resides in the cytoplasm. The enzyme catalyses uridine(54) in tRNA + (6R)-5,10-methylene-5,6,7,8-tetrahydrofolate + NADH + H(+) = 5-methyluridine(54) in tRNA + (6S)-5,6,7,8-tetrahydrofolate + NAD(+). It carries out the reaction uridine(54) in tRNA + (6R)-5,10-methylene-5,6,7,8-tetrahydrofolate + NADPH + H(+) = 5-methyluridine(54) in tRNA + (6S)-5,6,7,8-tetrahydrofolate + NADP(+). Its function is as follows. Catalyzes the folate-dependent formation of 5-methyl-uridine at position 54 (M-5-U54) in all tRNAs. The polypeptide is Methylenetetrahydrofolate--tRNA-(uracil-5-)-methyltransferase TrmFO (Methylobacterium radiotolerans (strain ATCC 27329 / DSM 1819 / JCM 2831 / NBRC 15690 / NCIMB 10815 / 0-1)).